We begin with the raw amino-acid sequence, 228 residues long: Large ribosomal subunit protein uL23m (228 aa).

Residues 194 to 228 form a disordered region; sequence PEEEGWSEVEENLPLDESAESAAEESSSKGSETRQ. Residues 195-216 show a composition bias toward acidic residues; that stretch reads EEEGWSEVEENLPLDESAESAA.

The protein belongs to the universal ribosomal protein uL23 family. In terms of assembly, component of the mitochondrial large ribosomal subunit (mt-LSU). Mature N.crassa 74S mitochondrial ribosomes consist of a small (37S) and a large (54S) subunit. The 37S small subunit contains a 16S ribosomal RNA (16S mt-rRNA) and 32 different proteins. The 54S large subunit contains a 23S rRNA (23S mt-rRNA) and 42 different proteins. uL23m forms the wall of the exit tunnel.

It is found in the mitochondrion. Functionally, component of the mitochondrial ribosome (mitoribosome), a dedicated translation machinery responsible for the synthesis of mitochondrial genome-encoded proteins, including at least some of the essential transmembrane subunits of the mitochondrial respiratory chain. The mitoribosomes are attached to the mitochondrial inner membrane and translation products are cotranslationally integrated into the membrane. This is Large ribosomal subunit protein uL23m (mrp20) from Neurospora crassa (strain ATCC 24698 / 74-OR23-1A / CBS 708.71 / DSM 1257 / FGSC 987).